Reading from the N-terminus, the 814-residue chain is Oxysterol-binding protein-related protein 1C (814 aa).

A PH domain is found at 103-235; sequence GNGIAGILYK…WVEALQAVKD (133 aa). Residues 300 to 367 are a coiled coil; it reads LLIDTLRQLE…AEEEFDEEEN (68 aa). Disordered stretches follow at residues 319 to 366 and 379 to 411; these read VVDE…DEEE and SSFKSSGSGFRTSSFSSDEDGFESEDDIDPSIK. The span at 347 to 366 shows a compositional bias: acidic residues; the sequence is ESDDDNERGDAAEEEFDEEE. A compositionally biased stretch (low complexity) spans 379-394; it reads SSFKSSGSGFRTSSFS. Positions 395–407 are enriched in acidic residues; that stretch reads SDEDGFESEDDID.

The protein belongs to the OSBP family. In terms of tissue distribution, expressed in roots, leaves, stems, flowers and pollen.

In terms of biological role, may be involved in the transport of sterols. The sequence is that of Oxysterol-binding protein-related protein 1C (ORP1C) from Arabidopsis thaliana (Mouse-ear cress).